The primary structure comprises 360 residues: S-adenosylmethionine decarboxylase proenzyme (360 aa).

Active-site residues include Glu13 and Glu16. The active-site Schiff-base intermediate with substrate; via pyruvic acid is Ser73. Pyruvic acid (Ser); by autocatalysis is present on Ser73. Cys87 (proton donor; for catalytic activity) is an active-site residue. Catalysis depends on proton acceptor; for processing activity residues Ser236 and His249.

This sequence belongs to the eukaryotic AdoMetDC family. Requires pyruvate as cofactor. In terms of processing, is synthesized initially as an inactive proenzyme. Formation of the active enzyme involves a self-maturation process in which the active site pyruvoyl group is generated from an internal serine residue via an autocatalytic post-translational modification. Two non-identical subunits are generated from the proenzyme in this reaction, and the pyruvate is formed at the N-terminus of the alpha chain, which is derived from the carboxyl end of the proenzyme. The post-translation cleavage follows an unusual pathway, termed non-hydrolytic serinolysis, in which the side chain hydroxyl group of the serine supplies its oxygen atom to form the C-terminus of the beta chain, while the remainder of the serine residue undergoes an oxidative deamination to produce ammonia and the pyruvoyl group blocking the N-terminus of the alpha chain. In terms of tissue distribution, stolon, also expressed in leaves, stems and roots.

The catalysed reaction is S-adenosyl-L-methionine + H(+) = S-adenosyl 3-(methylsulfanyl)propylamine + CO2. Its pathway is amine and polyamine biosynthesis; S-adenosylmethioninamine biosynthesis; S-adenosylmethioninamine from S-adenosyl-L-methionine: step 1/1. This is S-adenosylmethionine decarboxylase proenzyme (SAMDC) from Solanum tuberosum (Potato).